The chain runs to 81 residues: MYSVRNSGCSVGCSPRQGASPIMFGPSLGAMLSAPVVRASAPVVRASSPVVKRKSLVKRKSPVKRSPLKKRSQMRTSPCEA.

Residues 46 to 81 (ASSPVVKRKSLVKRKSPVKRSPLKKRSQMRTSPCEA) form a disordered region. Positions 51–73 (VKRKSLVKRKSPVKRSPLKKRSQ) are enriched in basic residues.

This is an uncharacterized protein from Frog virus 3 (isolate Goorha) (FV-3).